A 177-amino-acid polypeptide reads, in one-letter code: B-phycoerythrin beta chain (177 aa).

Cysteine 50 and cysteine 61 together coordinate phycourobilin. Residue asparagine 72 is modified to N4-methylasparagine. Positions 82 and 158 each coordinate (2R,3E)-phycoerythrobilin.

Belongs to the phycobiliprotein family. As to quaternary structure, heteromer of 6 alpha, 6 beta and one gamma chain. Contains two covalently linked phycoerythrobilin chromophores and one covalently linked phycourobilin chromophore.

Its subcellular location is the plastid. It localises to the chloroplast thylakoid membrane. Light-harvesting photosynthetic bile pigment-protein from the phycobiliprotein complex. This Porphyridium purpureum (Red alga) protein is B-phycoerythrin beta chain (cpeB).